The primary structure comprises 406 residues: Cysteine desulfurase (406 aa).

The residue at position 226 (lysine 226) is an N6-(pyridoxal phosphate)lysine. The active-site Cysteine persulfide intermediate is the cysteine 364.

It belongs to the class-V pyridoxal-phosphate-dependent aminotransferase family. Csd subfamily. As to quaternary structure, homodimer. Interacts with SufE and the SufBCD complex composed of SufB, SufC and SufD. The interaction with SufE is required to mediate the direct transfer of the sulfur atom from the S-sulfanylcysteine. Pyridoxal 5'-phosphate serves as cofactor.

Its subcellular location is the cytoplasm. It catalyses the reaction (sulfur carrier)-H + L-cysteine = (sulfur carrier)-SH + L-alanine. The catalysed reaction is L-selenocysteine + AH2 = hydrogenselenide + L-alanine + A + H(+). The protein operates within cofactor biosynthesis; iron-sulfur cluster biosynthesis. Functionally, cysteine desulfurases mobilize the sulfur from L-cysteine to yield L-alanine, an essential step in sulfur metabolism for biosynthesis of a variety of sulfur-containing biomolecules. Component of the suf operon, which is activated and required under specific conditions such as oxidative stress and iron limitation. Acts as a potent selenocysteine lyase in vitro, that mobilizes selenium from L-selenocysteine. Selenocysteine lyase activity is however unsure in vivo. This chain is Cysteine desulfurase, found in Escherichia coli O9:H4 (strain HS).